We begin with the raw amino-acid sequence, 200 residues long: ATP-dependent Clp protease proteolytic subunit (200 aa).

The active-site Nucleophile is the S102. The active site involves H127.

The protein belongs to the peptidase S14 family. In terms of assembly, fourteen ClpP subunits assemble into 2 heptameric rings which stack back to back to give a disk-like structure with a central cavity, resembling the structure of eukaryotic proteasomes.

It localises to the cytoplasm. The catalysed reaction is Hydrolysis of proteins to small peptides in the presence of ATP and magnesium. alpha-casein is the usual test substrate. In the absence of ATP, only oligopeptides shorter than five residues are hydrolyzed (such as succinyl-Leu-Tyr-|-NHMec, and Leu-Tyr-Leu-|-Tyr-Trp, in which cleavage of the -Tyr-|-Leu- and -Tyr-|-Trp bonds also occurs).. In terms of biological role, cleaves peptides in various proteins in a process that requires ATP hydrolysis. Has a chymotrypsin-like activity. Plays a major role in the degradation of misfolded proteins. This Dehalococcoides mccartyi (strain ATCC BAA-2266 / KCTC 15142 / 195) (Dehalococcoides ethenogenes (strain 195)) protein is ATP-dependent Clp protease proteolytic subunit.